We begin with the raw amino-acid sequence, 393 residues long: UDP-N-acetylglucosamine--N-acetylmuramyl-(pentapeptide) pyrophosphoryl-undecaprenol N-acetylglucosamine transferase (393 aa).

UDP-N-acetyl-alpha-D-glucosamine contacts are provided by residues Thr-14 to Gly-16, Asn-128, Arg-170, Ser-210, and Gln-321.

This sequence belongs to the glycosyltransferase 28 family. MurG subfamily.

Its subcellular location is the cell membrane. It catalyses the reaction di-trans,octa-cis-undecaprenyl diphospho-N-acetyl-alpha-D-muramoyl-L-alanyl-D-glutamyl-meso-2,6-diaminopimeloyl-D-alanyl-D-alanine + UDP-N-acetyl-alpha-D-glucosamine = di-trans,octa-cis-undecaprenyl diphospho-[N-acetyl-alpha-D-glucosaminyl-(1-&gt;4)]-N-acetyl-alpha-D-muramoyl-L-alanyl-D-glutamyl-meso-2,6-diaminopimeloyl-D-alanyl-D-alanine + UDP + H(+). It functions in the pathway cell wall biogenesis; peptidoglycan biosynthesis. In terms of biological role, cell wall formation. Catalyzes the transfer of a GlcNAc subunit on undecaprenyl-pyrophosphoryl-MurNAc-pentapeptide (lipid intermediate I) to form undecaprenyl-pyrophosphoryl-MurNAc-(pentapeptide)GlcNAc (lipid intermediate II). The chain is UDP-N-acetylglucosamine--N-acetylmuramyl-(pentapeptide) pyrophosphoryl-undecaprenol N-acetylglucosamine transferase from Bifidobacterium adolescentis (strain ATCC 15703 / DSM 20083 / NCTC 11814 / E194a).